Consider the following 216-residue polypeptide: Uracil phosphoribosyltransferase (216 aa).

GTP is bound by residues Arg-32, Arg-41, 75-78 (LGKI), and Lys-77. Arg-85 serves as a coordination point for 5-phospho-alpha-D-ribose 1-diphosphate. Arg-102 is a GTP binding site. Arg-110 is a binding site for 5-phospho-alpha-D-ribose 1-diphosphate. Residue Arg-131 participates in GTP binding. 5-phospho-alpha-D-ribose 1-diphosphate contacts are provided by residues Asp-137 and 137–145 (DPMLATGGS). Tyr-201 serves as a coordination point for D-ribose 5-phosphate. Uracil contacts are provided by residues Leu-202 and 207–209 (GDF). Residue Asp-208 participates in 5-phospho-alpha-D-ribose 1-diphosphate binding.

This sequence belongs to the UPRTase family. Mg(2+) serves as cofactor.

It catalyses the reaction UMP + diphosphate = 5-phospho-alpha-D-ribose 1-diphosphate + uracil. The protein operates within pyrimidine metabolism; UMP biosynthesis via salvage pathway; UMP from uracil: step 1/1. Allosterically activated by GTP. In terms of biological role, catalyzes the conversion of uracil and 5-phospho-alpha-D-ribose 1-diphosphate (PRPP) to UMP and diphosphate. In Lachancea kluyveri (Yeast), this protein is Uracil phosphoribosyltransferase (FUR1).